The sequence spans 704 residues: Ribosomal RNA large subunit methyltransferase K/L (704 aa).

This sequence belongs to the methyltransferase superfamily. RlmKL family.

The protein localises to the cytoplasm. It carries out the reaction guanosine(2445) in 23S rRNA + S-adenosyl-L-methionine = N(2)-methylguanosine(2445) in 23S rRNA + S-adenosyl-L-homocysteine + H(+). The enzyme catalyses guanosine(2069) in 23S rRNA + S-adenosyl-L-methionine = N(2)-methylguanosine(2069) in 23S rRNA + S-adenosyl-L-homocysteine + H(+). Functionally, specifically methylates the guanine in position 2445 (m2G2445) and the guanine in position 2069 (m7G2069) of 23S rRNA. The chain is Ribosomal RNA large subunit methyltransferase K/L from Alcanivorax borkumensis (strain ATCC 700651 / DSM 11573 / NCIMB 13689 / SK2).